A 464-amino-acid polypeptide reads, in one-letter code: Dolichyl-diphosphooligosaccharide--protein glycosyltransferase subunit 1B (464 aa).

Residues 1-24 form the signal peptide; sequence MAARIGIFSVFVAVLLSISAFSSA. Over 25–436 the chain is Lumenal; that stretch reads QDLQIVNAER…TFKPIYMLAE (412 aa). Residues N106 and N298 are each glycosylated (N-linked (GlcNAc...) asparagine). A Glycyl lysine isopeptide (Lys-Gly) (interchain with G-Cter in ubiquitin) cross-link involves residue K310. An N-linked (GlcNAc...) asparagine glycan is attached at N352. The helical transmembrane segment at 437 to 457 threads the bilayer; the sequence is PFMLVSAFFLVFVASLAYVHI. Topologically, residues 458–464 are cytoplasmic; that stretch reads DLNIVRK.

The protein belongs to the OST1 family. Component of the oligosaccharyltransferase (OST) complex.

It localises to the endoplasmic reticulum membrane. The protein operates within protein modification; protein glycosylation. In terms of biological role, subunit of the oligosaccharyl transferase (OST) complex that catalyzes the initial transfer of a defined glycan (Glc(3)Man(9)GlcNAc(2) in eukaryotes) from the lipid carrier dolichol-pyrophosphate to an asparagine residue within an Asn-X-Ser/Thr consensus motif in nascent polypeptide chains, the first step in protein N-glycosylation. N-glycosylation occurs cotranslationally and the complex associates with the Sec61 complex at the channel-forming translocon complex that mediates protein translocation across the endoplasmic reticulum (ER). All subunits are required for a maximal enzyme activity. This Arabidopsis thaliana (Mouse-ear cress) protein is Dolichyl-diphosphooligosaccharide--protein glycosyltransferase subunit 1B (OST1B).